Reading from the N-terminus, the 128-residue chain is Early E3 14.5 kDa protein (128 aa).

Belongs to the adenoviridae E3_15 family.

Its function is as follows. Protects virus-infected cells from TNF-induced cytolysis. The protein is Early E3 14.5 kDa protein of Human adenovirus C serotype 5 (HAdV-5).